The following is a 163-amino-acid chain: Nucleotide-binding protein BSU11020 (163 aa).

The protein belongs to the YajQ family.

In terms of biological role, nucleotide-binding protein. The sequence is that of Nucleotide-binding protein BSU11020 (yitK) from Bacillus subtilis (strain 168).